We begin with the raw amino-acid sequence, 165 residues long: Type II secretion system protein M (165 aa).

The Cytoplasmic segment spans residues 1-22; the sequence is MKELLAPVQAWWRSVTPREQKM. Residues 23–43 form a helical membrane-spanning segment; it reads VMGMGALTVLAIAYWGIWQPL. Residues 44-165 lie on the Periplasmic side of the membrane; sequence SERTAQAQAR…VKRLQLKRGG (122 aa).

This sequence belongs to the GSP M family. As to quaternary structure, type II secretion system is composed of four main components: the outer membrane complex, the inner membrane complex, the cytoplasmic secretion ATPase and the periplasm-spanning pseudopilus. Forms homodimers. Interacts with EpsL/GspL. Interacts with EpsE/GspE. Interacts with EpsF/GspF.

It is found in the cell inner membrane. In terms of biological role, inner membrane component of the type II secretion system required for the energy-dependent secretion of extracellular factors such as proteases and toxins from the periplasm. Plays a role in the complex assembly and recruits EpsL resulting in a stable complex in the inner membrane. Provides thus a link between the energy-providing EpsE protein in the cytoplasm and the rest of the T2SS machinery. The chain is Type II secretion system protein M (epsM) from Vibrio cholerae serotype O1 (strain ATCC 39315 / El Tor Inaba N16961).